A 99-amino-acid chain; its full sequence is Large ribosomal subunit protein uL23 (99 aa).

This sequence belongs to the universal ribosomal protein uL23 family. As to quaternary structure, part of the 50S ribosomal subunit. Contacts protein L29, and trigger factor when it is bound to the ribosome.

One of the early assembly proteins it binds 23S rRNA. One of the proteins that surrounds the polypeptide exit tunnel on the outside of the ribosome. Forms the main docking site for trigger factor binding to the ribosome. In Streptococcus suis (strain 98HAH33), this protein is Large ribosomal subunit protein uL23.